The following is a 343-amino-acid chain: Multidrug resistance protein MdtN (343 aa).

Residues 1 to 12 lie on the Cytoplasmic side of the membrane; that stretch reads MESTPKKAPRSK. Residues 13-33 form a helical; Signal-anchor for type II membrane protein membrane-spanning segment; that stretch reads FPALLVVALALVALVFVIWRV. The Periplasmic segment spans residues 34 to 343; that stretch reads DSAPSTNDAY…ASAVANLEPQ (310 aa).

This sequence belongs to the membrane fusion protein (MFP) (TC 8.A.1) family. Could be part of a tripartite efflux system composed of MdtN, MdtO and MdtP.

It is found in the cell inner membrane. Its function is as follows. Could be involved in resistance to puromycin, acriflavine and tetraphenylarsonium chloride. The sequence is that of Multidrug resistance protein MdtN (mdtN) from Shigella flexneri.